The following is a 90-amino-acid chain: Large ribosomal subunit protein uL23c (90 aa).

It belongs to the universal ribosomal protein uL23 family. As to quaternary structure, part of the 50S ribosomal subunit.

The protein localises to the plastid. It localises to the chloroplast. Its function is as follows. Binds to 23S rRNA. This is Large ribosomal subunit protein uL23c (rpl23) from Tetradesmus obliquus (Green alga).